A 404-amino-acid polypeptide reads, in one-letter code: Floricaula/leafy-like protein FL1 (404 aa).

The tract at residues 210-251 (IGVPEHSSESDERKADTNKQKRRRSKEPGEDGEDRPREHPFI) is disordered. Basic and acidic residues-rich tracts occupy residues 215 to 228 (HSSE…DTNK) and 235 to 249 (KEPG…REHP). DNA-binding regions lie at residues 246–250 (REHPF), 315–322 (NKPKMRHY), and 386–389 (YVPT).

It belongs to the FLO/LFY family. Expressed in both male and female cones, vegetative buds and needles, but not in the roots.

Its subcellular location is the nucleus. In terms of biological role, probable transcription factor. This is Floricaula/leafy-like protein FL1 from Pinus radiata (Monterey pine).